A 314-amino-acid polypeptide reads, in one-letter code: GDP-L-fucose synthase (314 aa).

Residues 15-21 and 109-112 contribute to the NADP(+) site; these read GHKGMVG and LGSS. Tyr140 serves as the catalytic Proton donor/acceptor. Residues Lys144, 167-170, and His183 contribute to the NADP(+) site; that span reads PTNL. 4 residues coordinate substrate: Lys191, Trp206, Arg213, and Asp273.

It belongs to the NAD(P)-dependent epimerase/dehydratase family. Fucose synthase subfamily.

The enzyme catalyses GDP-beta-L-fucose + NADP(+) = GDP-4-dehydro-alpha-D-rhamnose + NADPH + H(+). Its pathway is nucleotide-sugar biosynthesis; GDP-L-fucose biosynthesis via de novo pathway; GDP-L-fucose from GDP-alpha-D-mannose: step 2/2. In terms of biological role, catalyzes the two-step NADP-dependent conversion of GDP-4-dehydro-6-deoxy-D-mannose to GDP-fucose, involving an epimerase and a reductase reaction. In Sinorhizobium fredii (strain NBRC 101917 / NGR234), this protein is GDP-L-fucose synthase.